The following is a 501-amino-acid chain: Vitamin D 25-hydroxylase (501 aa).

The signal sequence occupies residues 1-26; sequence MWKLWRAEEGAAALGGALFLLLFALG. Ala-250 provides a ligand contact to substrate. Cys-448 contacts heme.

It belongs to the cytochrome P450 family. In terms of assembly, homodimer. The cofactor is heme.

The protein resides in the endoplasmic reticulum membrane. The protein localises to the microsome membrane. It carries out the reaction calciol + reduced [NADPH--hemoprotein reductase] + O2 = calcidiol + oxidized [NADPH--hemoprotein reductase] + H2O + H(+). It catalyses the reaction vitamin D2 + reduced [NADPH--hemoprotein reductase] + O2 = 25-hydroxyvitamin D2 + oxidized [NADPH--hemoprotein reductase] + H2O + H(+). The enzyme catalyses 1alpha-hydroxyvitamin D2 + reduced [NADPH--hemoprotein reductase] + O2 = 1alpha,25-dihydroxyvitamin D2 + oxidized [NADPH--hemoprotein reductase] + H2O + H(+). The catalysed reaction is alfacalcidol + reduced [NADPH--hemoprotein reductase] + O2 = calcitriol + oxidized [NADPH--hemoprotein reductase] + H2O + H(+). The protein operates within hormone biosynthesis; vitamin D biosynthesis. Functionally, a cytochrome P450 monooxygenase involved in activation of vitamin D precursors. Catalyzes hydroxylation at C-25 of both forms of vitamin D, vitamin D(2) and D(3) (calciol). Can metabolize vitamin D analogs/prodrugs 1alpha-hydroxyvitamin D(2) (doxercalciferol) and 1alpha-hydroxyvitamin D(3) (alfacalcidol) forming 25-hydroxy derivatives. Mechanistically, uses molecular oxygen inserting one oxygen atom into a substrate, and reducing the second into a water molecule, with two electrons provided by NADPH via cytochrome P450 reductase (CPR; NADPH-ferrihemoprotein reductase). This chain is Vitamin D 25-hydroxylase (CYP2R1), found in Homo sapiens (Human).